We begin with the raw amino-acid sequence, 102 residues long: MPVAVGVIQTDGFPAVLAAADAMVKAASVTLVSFDKAERAQFYVAVRGPVSEVERSMEAGIAAAEETYNGTVITHYMIPNPPDNVETVMPIAYSDEVEPFRV.

The region spanning 4-90 (AVGVIQTDGF…PPDNVETVMP (87 aa)) is the BMC domain.

The protein belongs to the bacterial microcompartments protein family. CcmK subfamily. In terms of assembly, interacts stably with CcmK4, forming heterohexamers that can make dodecamers. Heterohexamers have a 1:2 CcmK3:CcmK4 stoichiometry. Upon expression in E.coli forms oligomers that could be dimers or trimers, but never hexamers; bulky residues in the pore region probably preclude the formation of homohexamers.

It localises to the carboxysome. A probably non-essential, minor shell protein of the carboxysome, a polyhedral inclusion where RuBisCO (ribulose bisphosphate carboxylase, rbcL-rbcS) is sequestered. Hexamers form sheets that form the facets of the polyhedral carboxysome. In PCC 7418 there are several CcmK paralogs with presumably functional differences. This subunit probably only makes heterohexamers with CcmK4. Heterohexamers can also make dodecamers, formation depends on buffer conditions. The protein is Carboxysome shell protein CcmK3 of Halothece sp. (strain PCC 7418) (Synechococcus sp. (strain PCC 7418)).